A 161-amino-acid chain; its full sequence is Allophycocyanin alpha-B chain (161 aa).

N71 carries the post-translational modification N4-methylasparagine. C81 is a (2R,3E)-phycocyanobilin binding site.

Belongs to the phycobiliprotein family. In terms of processing, contains one covalently linked bilin chromophore.

The protein localises to the plastid. It localises to the chloroplast thylakoid membrane. Its function is as follows. Allophycocyanin is a photosynthetic bile pigment-protein complex with maximum absorption at approximately 650 nanometers. The sequence is that of Allophycocyanin alpha-B chain (apcD) from Pyropia yezoensis (Susabi-nori).